The following is a 538-amino-acid chain: Chaperonin GroEL 1 (538 aa).

ATP is bound by residues Thr-30–Pro-33, Lys-51, Asp-87–Thr-91, Gly-415, Asn-479–Ala-481, and Asp-495.

This sequence belongs to the chaperonin (HSP60) family. Forms a cylinder of 14 subunits composed of two heptameric rings stacked back-to-back. Interacts with the co-chaperonin GroES.

It localises to the cytoplasm. It carries out the reaction ATP + H2O + a folded polypeptide = ADP + phosphate + an unfolded polypeptide.. Together with its co-chaperonin GroES, plays an essential role in assisting protein folding. The GroEL-GroES system forms a nano-cage that allows encapsulation of the non-native substrate proteins and provides a physical environment optimized to promote and accelerate protein folding. This chain is Chaperonin GroEL 1, found in Chromobacterium violaceum (strain ATCC 12472 / DSM 30191 / JCM 1249 / CCUG 213 / NBRC 12614 / NCIMB 9131 / NCTC 9757 / MK).